Consider the following 689-residue polypeptide: Elongation factor G (689 aa).

In terms of domain architecture, tr-type G spans 9 to 283 (AKFRNIGIMA…AIIEFMPSPL (275 aa)). GTP-binding positions include 18–25 (AHIDAGKT), 82–86 (DTPGH), and 136–139 (NKMD).

Belongs to the TRAFAC class translation factor GTPase superfamily. Classic translation factor GTPase family. EF-G/EF-2 subfamily.

The protein localises to the cytoplasm. Functionally, catalyzes the GTP-dependent ribosomal translocation step during translation elongation. During this step, the ribosome changes from the pre-translocational (PRE) to the post-translocational (POST) state as the newly formed A-site-bound peptidyl-tRNA and P-site-bound deacylated tRNA move to the P and E sites, respectively. Catalyzes the coordinated movement of the two tRNA molecules, the mRNA and conformational changes in the ribosome. The chain is Elongation factor G from Clostridium botulinum (strain 657 / Type Ba4).